Consider the following 437-residue polypeptide: Eukaryotic peptide chain release factor subunit 1 (437 aa).

An NIKS motif; plays an important role in translational termination motif is present at residues asparagine 61–serine 64.

This sequence belongs to the eukaryotic release factor 1 family. Component of the eRF1-eRF3-GTP ternary complex, composed of ETF1/ERF1 and eRF3 (GSPT1/ERF3A or GSPT2/ERF3B) and GTP.

It localises to the cytoplasm. Its function is as follows. Component of the eRF1-eRF3-GTP ternary complex, a ternary complex that mediates translation termination in response to the termination codons. The eRF1-eRF3-GTP complex binds to a stop codon in the ribosomal A-site. ETF1/ERF1 is responsible for stop codon recognition and inducing hydrolysis of peptidyl-tRNA. Following GTP hydrolysis, eRF3 (GSPT1/ERF3A or GSPT2/ERF3B) dissociates, permitting ETF1/eRF1 to accommodate fully in the A-site, followed by hydrolysis of peptidyl-tRNA. This is Eukaryotic peptide chain release factor subunit 1 (etf1) from Xenopus laevis (African clawed frog).